A 177-amino-acid chain; its full sequence is MDETLNVDTEQTLTCLTLTMYHPNHQDQKLFRGINFSRKEEIKADAVVAFGRDYNVCRYPLLSNRVSRIQFNLQFFKHFNCSTTAIEIKNLSKKNKLYVDNLELDYLNKIELPPKCMIRFGDFQILAVIERGDCDEKFEICCEKSHVSLVQDSFIPTMQPIPECGTLNAVEIDENEY.

Residues 48-104 (VAFGRDYNVCRYPLLSNRVSRIQFNLQFFKHFNCSTTAIEIKNLSKKNKLYVDNLEL) form the FHA domain.

This sequence belongs to the TIFA family. In terms of assembly, interacts with traf6.

The protein resides in the cytoplasm. Its function is as follows. Adapter molecule that plays a key role in the activation of pro-inflammatory NF-kappa-B signaling following detection of bacterial pathogen-associated molecular pattern metabolites (PAMPs). Promotes activation of an innate immune response by inducing the oligomerization and polyubiquitination of TRAF6, which leads to the activation of TAK1 and IKK through a proteasome-independent mechanism. The protein is TRAF-interacting protein with FHA domain-containing protein A of Xenopus tropicalis (Western clawed frog).